The following is a 92-amino-acid chain: FMRFamide-like neuropeptides 16 (92 aa).

The signal sequence occupies residues 1–24 (MNFSGFEFSSIVAFFLLILQLSTA). Residues 25-55 (AVLPADYAYGVADEMSALPDSGSLFAEQRPS) constitute a propeptide that is removed on maturation. Residues F64, F74, and F84 each carry the phenylalanine amide modification. Positions 87–92 (SAPFEQ) are excised as a propeptide.

The protein belongs to the FARP (FMRFamide related peptide) family. Each flp gene is expressed in a distinct set of neurons.

Its subcellular location is the secreted. Its function is as follows. FMRFamides and FMRFamide-like peptides are neuropeptides. AQTFVRF-amide inhibits the activity of dissected pharyngeal myogenic muscle system. This Caenorhabditis elegans protein is FMRFamide-like neuropeptides 16.